A 423-amino-acid chain; its full sequence is Pentamidine resistance factor, mitochondrial (423 aa).

The chain crosses the membrane as a helical span at residues 199–219 (PVFFTLVFIFEEVSVLIFTFF).

Interacts with COX18. This interaction may be essential for its insertion into mitochondrial inner membrane.

It localises to the mitochondrion inner membrane. In terms of biological role, probably involved in mitochondrial export. Confers resistance to the anti-pneumocystis carinii drug pentamidine. May act by the removal of pentamidine, or its damage targets, from the matrix by an active-transport mechanism. The sequence is that of Pentamidine resistance factor, mitochondrial (PNT1) from Saccharomyces cerevisiae (strain ATCC 204508 / S288c) (Baker's yeast).